We begin with the raw amino-acid sequence, 244 residues long: tRNA (guanine-N(1)-)-methyltransferase (244 aa).

S-adenosyl-L-methionine contacts are provided by residues glycine 114 and isoleucine 134–leucine 139. The interval arginine 220–alanine 244 is disordered.

Belongs to the RNA methyltransferase TrmD family. As to quaternary structure, homodimer.

It localises to the cytoplasm. It carries out the reaction guanosine(37) in tRNA + S-adenosyl-L-methionine = N(1)-methylguanosine(37) in tRNA + S-adenosyl-L-homocysteine + H(+). In terms of biological role, specifically methylates guanosine-37 in various tRNAs. This Rhizobium johnstonii (strain DSM 114642 / LMG 32736 / 3841) (Rhizobium leguminosarum bv. viciae) protein is tRNA (guanine-N(1)-)-methyltransferase.